Here is a 147-residue protein sequence, read N- to C-terminus: Hemoglobin subunit beta-3 (147 aa).

Residues 2 to 147 (EWTDAERTAI…VTSALSRQYH (146 aa)) form the Globin domain. Heme b-binding residues include His63 and His92.

It belongs to the globin family. As to quaternary structure, heterotetramer of two alpha chains and two beta chains. In terms of tissue distribution, red blood cells.

Involved in oxygen transport from gills to the various peripheral tissues. The sequence is that of Hemoglobin subunit beta-3 (hbb3) from Muraena helena (Mediterranean moray).